A 476-amino-acid chain; its full sequence is MPLAEGSTFAGFTIVRQLGSGGMGEVYLARHPRLPRQDALKVLRADVSADGEYRARFNREADAAASLWHPHIVAVHDRGEFDGQLWIDMDFVDGTDTVSLLRDRYPNGMPGPEVTEIITAVAEALDYAHERRLLHRDVKPANILIANPDSPDRRIMLADFGIAGWVDDPSGLTATNMTVGTVSYAAPEQLMGNELDGRADQYALAATAFHLLTGSPPFQHANPAVVISQHLSASPPAIGDRVPELTPLDPVFAKALAKQPKDRYQRCVDFARALGHRLGGAGDPDDTRVSQPVAVAAPAKRSLLRTAVIVPAVLAMLLVMAVAVTVREFQRADDERAAQPARTRTTTSAGTTTSVAPASTTRPAPTTPTTTGAADTATASPTAAVVAIGALCFPLGSTGTTKTGATAYCSTLQGTNTTIWSLTEDTVASPTVTATADPTEAPLPIEQESPIRVCMQQTGQTRRECREEIRRSNGWP.

Phosphothreonine; by autocatalysis occurs at positions 8 and 13. One can recognise a Protein kinase domain in the interval 12 to 279; sequence FTIVRQLGSG…FARALGHRLG (268 aa). Residues 18–26 and lysine 41 each bind ATP; that span reads LGSGGMGEV. The Proton acceptor role is filled by aspartate 137. Phosphothreonine; by autocatalysis is present on residues threonine 173, threonine 175, and threonine 287. Phosphoserine; by autocatalysis is present on serine 290. The segment at 332–376 is disordered; it reads ADDERAAQPARTRTTTSAGTTTSVAPASTTRPAPTTPTTTGAADT. A compositionally biased stretch (low complexity) spans 338–376; that stretch reads AQPARTRTTTSAGTTTSVAPASTTRPAPTTPTTTGAADT.

The protein belongs to the protein kinase superfamily. Ser/Thr protein kinase family. Post-translationally, dephosphorylated by PstP.

The enzyme catalyses L-seryl-[protein] + ATP = O-phospho-L-seryl-[protein] + ADP + H(+). It carries out the reaction L-threonyl-[protein] + ATP = O-phospho-L-threonyl-[protein] + ADP + H(+). The protein is Serine/threonine-protein kinase PknF (pknF) of Mycobacterium bovis (strain ATCC BAA-935 / AF2122/97).